Here is a 500-residue protein sequence, read N- to C-terminus: Lysine--tRNA ligase (500 aa).

Residues glutamate 409 and glutamate 416 each contribute to the Mg(2+) site.

This sequence belongs to the class-II aminoacyl-tRNA synthetase family. Homodimer. Mg(2+) is required as a cofactor.

It localises to the cytoplasm. It carries out the reaction tRNA(Lys) + L-lysine + ATP = L-lysyl-tRNA(Lys) + AMP + diphosphate. In Lysinibacillus sphaericus (strain C3-41), this protein is Lysine--tRNA ligase.